A 565-amino-acid polypeptide reads, in one-letter code: Protein NRT1/ PTR FAMILY 5.15 (565 aa).

2 helical membrane passes run 49–67 (FAYFGIACNLITYLTGPLG) and 80–100 (WSGTASILPILGAFVADAYLG). Thr-104 is modified (phosphothreonine). The next 10 helical transmembrane spans lie at 110-130 (LIYILGLGLLTLSASLIIMGL), 142-162 (SIWVNTLFFCSLYLVAIGQGG), 189-209 (FFNWWFLSLSAGISISIIVVA), 217-237 (WAFGFGIPCLFMVMALAIFLL), 331-351 (IPIWITYVVSTIPYAQYITFF), 368-388 (IPAASLLSFVGVSILISVPLY), 409-429 (LQRIGAGMVLSVFNMMLAALV), 454-474 (IWWFVPQYLLLGMIDLFSMVG), 490-510 (IGLSLSLSAMGLSSFLSGFLI), and 534-554 (YFYWLLAAFTAIAFFAFLFIS).

This sequence belongs to the major facilitator superfamily. Proton-dependent oligopeptide transporter (POT/PTR) (TC 2.A.17) family. As to expression, expressed in shoots, roots and leaves.

It is found in the membrane. This Arabidopsis thaliana (Mouse-ear cress) protein is Protein NRT1/ PTR FAMILY 5.15 (NPF5.15).